The primary structure comprises 217 residues: Replication-associated protein A (217 aa).

The segment covering 1–17 (MRAPASSAASNRPGPSN) has biased composition (low complexity). The tract at residues 1-22 (MRAPASSAASNRPGPSNHPTPR) is disordered. The region spanning 22 to 125 (RWNSKQFFLT…NGDSDEMGEL (104 aa)) is the CRESS-DNA virus Rep endonuclease domain. The RCR-1 motif lies at 29 to 32 (FLTY). 3 residues coordinate a divalent metal cation: Glu63, His71, and His73. Residues 71–73 (HLH) carry the RCR-2 motif. Tyr111 acts as the For DNA cleavage activity in catalysis. Residues 111–114 (YISK) carry the RCR-3 motif. Positions 176–188 (SAAALFTEPPPVY) are oligomerization.

The protein belongs to the geminiviridae Rep protein family. Homooligomer. Part of the C- and V-complexes which are RepA-Rep-DNA complexes involved in the c-sense and v-sense transcription.

The protein localises to the host nucleus. It is found in the host cytoplasm. Implicated in enhancement of V-sense gene expression. Acts a an inhibitor of C-sense gene transcription. This is Replication-associated protein A from Miscanthus sacchariflorus (MiSV).